The following is a 431-amino-acid chain: Dihydroorotase (431 aa).

Residues histidine 59 and histidine 61 each coordinate Zn(2+). Substrate-binding positions include 61-63 (HLR) and asparagine 93. Zn(2+)-binding residues include aspartate 151, histidine 178, histidine 231, and aspartate 304. Aspartate 304 is an active-site residue. Substrate is bound by residues histidine 308 and 322 to 323 (FG).

It belongs to the metallo-dependent hydrolases superfamily. DHOase family. Class I DHOase subfamily. Zn(2+) is required as a cofactor.

It catalyses the reaction (S)-dihydroorotate + H2O = N-carbamoyl-L-aspartate + H(+). Its pathway is pyrimidine metabolism; UMP biosynthesis via de novo pathway; (S)-dihydroorotate from bicarbonate: step 3/3. Catalyzes the reversible cyclization of carbamoyl aspartate to dihydroorotate. This is Dihydroorotase from Caldanaerobacter subterraneus subsp. tengcongensis (strain DSM 15242 / JCM 11007 / NBRC 100824 / MB4) (Thermoanaerobacter tengcongensis).